Consider the following 107-residue polypeptide: ATP-dependent Clp protease adapter protein ClpS (107 aa).

A compositionally biased stretch (basic and acidic residues) spans Met-1–Asp-12. The interval Met-1 to Pro-21 is disordered.

This sequence belongs to the ClpS family. As to quaternary structure, binds to the N-terminal domain of the chaperone ClpA.

Involved in the modulation of the specificity of the ClpAP-mediated ATP-dependent protein degradation. This Zymomonas mobilis subsp. mobilis (strain ATCC 31821 / ZM4 / CP4) protein is ATP-dependent Clp protease adapter protein ClpS.